Reading from the N-terminus, the 148-residue chain is 3-hydroxyacyl-[acyl-carrier-protein] dehydratase FabZ (148 aa).

The active site involves His-47.

This sequence belongs to the thioester dehydratase family. FabZ subfamily.

Its subcellular location is the cytoplasm. It carries out the reaction a (3R)-hydroxyacyl-[ACP] = a (2E)-enoyl-[ACP] + H2O. In terms of biological role, involved in unsaturated fatty acids biosynthesis. Catalyzes the dehydration of short chain beta-hydroxyacyl-ACPs and long chain saturated and unsaturated beta-hydroxyacyl-ACPs. The polypeptide is 3-hydroxyacyl-[acyl-carrier-protein] dehydratase FabZ (Hydrogenobaculum sp. (strain Y04AAS1)).